The following is a 586-amino-acid chain: MLSILMQGLRLKKCFLPILVMFFLAGCVNLLGSSFTASLKNDANASSDFYIRKIEQTQNQQDLQTYKLLAARVLVTENKIPQAEAYLAELIDLNDEQKLDKSLIEAHISAVKGKNETAEYQLSLIHLTSLSPSQKSRYYEIVSRIAENRHDNISAIKARIQMDNFLSDIQRKQQNNDRTWALLRNTDSEVLNNTDAEGNITLSGWLTLAQLYNDNLNQPAQLIQTLLTWKNYYPTHTAAHLLPTELQGLANFQQTTLTQVGLILPLSGNTRLIGETIKNGFDDAKVNYNVQVHVFDSMKMSIEQIINQAKKQGINTLVGPLLKQNVDVIVNNPYLVQDLNVLALNSTPNARAIEHLCYYGLSPEDEAESAASKMWNDTVRIPLVLVPQNNLGRRTAAAFTLRWQQLLGTDANIKFYNQTADINFALKSGLSESTDGVYIIANNKQLAEIKAVLDNINPTLKLYASSRSNSPNSGPEHRLFLNNLQFSDIPFFKDRESEQYKKIEKMTNNDYSLMHLYAMGYDAWLLINQFNEFRQIPGFTIDGLTGKLSAGPNCNVERDMTWFQYQNGSIYPLNEQDDSIYLINEE.

A signal peptide spans 1 to 26; that stretch reads MLSILMQGLRLKKCFLPILVMFFLAG. Cys-27 carries the N-palmitoyl cysteine lipid modification. The S-diacylglycerol cysteine moiety is linked to residue Cys-27.

Belongs to the LpoA family. As to quaternary structure, interacts with PBP1a.

The protein resides in the cell outer membrane. Its function is as follows. Regulator of peptidoglycan synthesis that is essential for the function of penicillin-binding protein 1A (PBP1a). The protein is Penicillin-binding protein activator LpoA of Histophilus somni (strain 2336) (Haemophilus somnus).